The chain runs to 180 residues: Decaprenylphosphoryl-5-phosphoribose phosphatase (180 aa).

Transmembrane regions (helical) follow at residues 31-51 (ALSH…AGAL), 61-81 (LAVG…KRVV), 116-136 (VLLA…PMAL), and 139-159 (LVLG…GALV).

This sequence belongs to the PA-phosphatase related phosphoesterase family.

It localises to the cell membrane. It carries out the reaction trans,octa-cis-decaprenylphospho-beta-D-ribofuranose 5-phosphate + H2O = trans,octa-cis-decaprenylphospho-beta-D-ribofuranose + phosphate. It participates in cell wall biogenesis; cell wall polysaccharide biosynthesis. In terms of biological role, phosphatase involved in the biosynthesis of decaprenylphosphoryl arabinose (DPA), which serves as the arabinose donor for the biosynthesis of arabinogalactan, the major mycobacterial cell wall polysaccharide. Catalyzes the dephosphorylation of decaprenylphosphoryl-5-phosphoribose (DPPR) to decaprenyl-phosphoribose (DPR). This Mycolicibacterium smegmatis (strain ATCC 700084 / mc(2)155) (Mycobacterium smegmatis) protein is Decaprenylphosphoryl-5-phosphoribose phosphatase.